Reading from the N-terminus, the 1054-residue chain is Cell wall acid trehalase ARB_03719 (1054 aa).

Positions 1-24 are cleaved as a signal peptide; sequence MKQPNINLAACILWLLSIITAVAA. N-linked (GlcNAc...) asparagine glycans are attached at residues Asn138, Asn178, Asn183, Asn207, Asn239, Asn277, and Asn309. 450-451 serves as a coordination point for substrate; it reads WD. N-linked (GlcNAc...) asparagine glycans are attached at residues Asn495, Asn515, Asn572, and Asn580. Glu586 acts as the Proton donor in catalysis. Asn620 and Asn648 each carry an N-linked (GlcNAc...) asparagine glycan. 654 to 655 contacts substrate; that stretch reads KQ. N-linked (GlcNAc...) asparagine glycans are attached at residues Asn808 and Asn844. A disordered region spans residues 950–974; it reads PLHPVTDPENGDASGSSPTTPASSV. Residues 962–974 show a composition bias toward low complexity; it reads ASGSSPTTPASSV. N-linked (GlcNAc...) asparagine glycans are attached at residues Asn1004, Asn1007, and Asn1039.

This sequence belongs to the glycosyl hydrolase 65 family.

It localises to the secreted. The protein localises to the cell wall. It carries out the reaction alpha,alpha-trehalose + H2O = alpha-D-glucose + beta-D-glucose. Its function is as follows. Cell wall acid trehalase that catalyzes hydrolysis of the disaccharide trehalose and required for growth on trehalose as carbon source. Plays a role in virulence. This Arthroderma benhamiae (strain ATCC MYA-4681 / CBS 112371) (Trichophyton mentagrophytes) protein is Cell wall acid trehalase ARB_03719.